The following is a 145-amino-acid chain: MSKPIYVLSGPNLNLLGTREPEIYGHQTLDDVRRLCEARAKSLGREIVFRQSNHEGELIDWIQEAREKACALVINPAGYGHTSVAILDALKAVGLPVVECHLSNPAARETFRRKTYVSLAATGVVSGFGAASYELAVEAAAGLAR.

Tyr24 acts as the Proton acceptor in catalysis. The substrate site is built by Asn75, His81, and Asp88. Residue His101 is the Proton donor of the active site. Substrate contacts are provided by residues 102–103 (LS) and Arg112.

This sequence belongs to the type-II 3-dehydroquinase family. Homododecamer.

It carries out the reaction 3-dehydroquinate = 3-dehydroshikimate + H2O. It participates in metabolic intermediate biosynthesis; chorismate biosynthesis; chorismate from D-erythrose 4-phosphate and phosphoenolpyruvate: step 3/7. Catalyzes a trans-dehydration via an enolate intermediate. The polypeptide is 3-dehydroquinate dehydratase (Phenylobacterium zucineum (strain HLK1)).